Consider the following 1042-residue polypeptide: MKQSPALAPEERCRRAGSPKPVLRADDNNMGNGCSQKLATANLLRFLLLVLIPCICALVLLLVILLSYVGTLQKVYFKSNGSEPLVTDGEIQGSDVILTNTIYNQSTVVSTAHPDQHVPAWTTDASLPGDQSHRNTSACMNITHSQCQMLPYHATLTPLLSVVRNMEMEKFLKFFTYLHRLSCYQHIMLFGCTLAFPECIIDGDDSHGLLPCRSFCEAAKEGCESVLGMVNYSWPDFLRCSQFRNQTESSNVSRICFSPQQENGKQLLCGRGENFLCASGICIPGKLQCNGYNDCDDWSDEAHCNCSENLFHCHTGKCLNYSLVCDGYDDCGDLSDEQNCDCNPTTEHRCGDGRCIAMEWVCDGDHDCVDKSDEVNCSCHSQGLVECRNGQCIPSTFQCDGDEDCKDGSDEENCSVIQTSCQEGDQRCLYNPCLDSCGGSSLCDPNNSLNNCSQCEPITLELCMNLPYNSTSYPNYFGHRTQKEASISWESSLFPALVQTNCYKYLMFFSCTILVPKCDVNTGEHIPPCRALCEHSKERCESVLGIVGLQWPEDTDCSQFPEENSDNQTCLMPDEYVEECSPSHFKCRSGQCVLASRRCDGQADCDDDSDEENCGCKERDLWECPSNKQCLKHTVICDGFPDCPDYMDEKNCSFCQDDELECANHACVSRDLWCDGEADCSDSSDEWDCVTLSINVNSSSFLMVHRAATEHHVCADGWQEILSQLACKQMGLGEPSVTKLIQEQEKEPRWLTLHSNWESLNGTTLHELLVNGQSCESRSKISLLCTKQDCGRRPAARMNKRILGGRTSRPGRWPWQCSLQSEPSGHICGCVLIAKKWVLTVAHCFEGRENAAVWKVVLGINNLDHPSVFMQTRFVKTIILHPRYSRAVVDYDISIVELSEDISETGYVRPVCLPNPEQWLEPDTYCYITGWGHMGNKMPFKLQEGEVRIISLEHCQSYFDMKTITTRMICAGYESGTVDSCMGDSGGPLVCEKPGGRWTLFGLTSWGSVCFSKVLGPGVYSNVSYFVEWIKRQIYIQTFLLN.

The segment at 1–25 (MKQSPALAPEERCRRAGSPKPVLRA) is disordered. Over 1–45 (MKQSPALAPEERCRRAGSPKPVLRADDNNMGNGCSQKLATANLLR) the chain is Cytoplasmic. Residues 26-29 (DDNN) carry the DDNN motif motif. A helical; Signal-anchor for type II membrane protein membrane pass occupies residues 46-66 (FLLLVLIPCICALVLLLVILL). Residues 67 to 1042 (SYVGTLQKVY…QIYIQTFLLN (976 aa)) lie on the Extracellular side of the membrane. N-linked (GlcNAc...) asparagine glycans are attached at residues asparagine 80, asparagine 104, asparagine 135, and asparagine 141. Residues 134-259 (RNTSACMNIT…SNVSRICFSP (126 aa)) form the FZ 1 domain. 8 disulfide bridges follow: cysteine 139/cysteine 199, cysteine 147/cysteine 192, cysteine 183/cysteine 223, cysteine 212/cysteine 256, cysteine 216/cysteine 240, cysteine 269/cysteine 282, cysteine 277/cysteine 295, and cysteine 289/cysteine 304. N-linked (GlcNAc...) asparagine glycosylation is found at asparagine 231, asparagine 245, and asparagine 251. 4 consecutive LDL-receptor class A domains span residues 268–304 (LCGRGENFLCASGICIPGKLQCNGYNDCDDWSDEAHC), 305–340 (NCSENLFHCHTGKCLNYSLVCDGYDDCGDLSDEQNC), 341–377 (DCNPTTEHRCGDGRCIAMEWVCDGDHDCVDKSDEVNC), and 378–415 (SCHSQGLVECRNGQCIPSTFQCDGDEDCKDGSDEENCS). An N-linked (GlcNAc...) asparagine glycan is attached at asparagine 305. Disulfide bonds link cysteine 306-cysteine 318, cysteine 313-cysteine 331, cysteine 325-cysteine 340, cysteine 342-cysteine 355, cysteine 350-cysteine 368, cysteine 362-cysteine 377, cysteine 379-cysteine 392, cysteine 387-cysteine 405, and cysteine 399-cysteine 414. Asparagine 320 carries N-linked (GlcNAc...) asparagine glycosylation. An N-linked (GlcNAc...) asparagine glycan is attached at asparagine 376. Residues asparagine 413, asparagine 446, asparagine 451, and asparagine 469 are each glycosylated (N-linked (GlcNAc...) asparagine). An FZ 2 domain is found at 450–573 (NNCSQCEPIT…NSDNQTCLMP (124 aa)). Intrachain disulfides connect cysteine 455–cysteine 518, cysteine 463–cysteine 511, cysteine 502–cysteine 540, cysteine 529–cysteine 570, cysteine 533–cysteine 557, cysteine 580–cysteine 592, cysteine 587–cysteine 605, cysteine 599–cysteine 614, cysteine 616–cysteine 630, cysteine 624–cysteine 643, cysteine 637–cysteine 652, cysteine 655–cysteine 667, cysteine 662–cysteine 680, and cysteine 674–cysteine 689. A glycan (N-linked (GlcNAc...) asparagine) is linked at asparagine 567. 3 consecutive LDL-receptor class A domains span residues 579-614 (ECSPSHFKCRSGQCVLASRRCDGQADCDDDSDEENC), 615-653 (GCKERDLWECPSNKQCLKHTVICDGFPDCPDYMDEKNCS), and 654-689 (FCQDDELECANHACVSRDLWCDGEADCSDSSDEWDC). Asparagine 651 carries N-linked (GlcNAc...) asparagine glycosylation. The SRCR domain occupies 690–801 (VTLSINVNSS…RRPAARMNKR (112 aa)). Asparagine 697 and asparagine 761 each carry an N-linked (GlcNAc...) asparagine glycan. 5 disulfides stabilise this stretch: cysteine 790–cysteine 912, cysteine 828–cysteine 844, cysteine 926–cysteine 991, cysteine 955–cysteine 970, and cysteine 981–cysteine 1010. The Peptidase S1 domain maps to 802–1035 (ILGGRTSRPG…FVEWIKRQIY (234 aa)). Residues histidine 843 and aspartate 892 each act as charge relay system in the active site. The active-site Charge relay system is the serine 985. Asparagine 1022 is a glycosylation site (N-linked (GlcNAc...) asparagine).

This sequence belongs to the peptidase S1 family. In terms of processing, N-glycosylated; required for processing and activation. Activated through proteolytic processing by a trypsin-like protease; cleaved into a N-terminal propeptide and an activated corin protease fragment. Different soluble forms are produced by cleavage and autocatalytic cleavage: Atrial natriuretic peptide-converting enzyme, 180 kDa soluble fragment is produced by cleavage by ADAM10, while 160 kDa and 100 kDa soluble fragments are produced by autocatalytic cleavage. Cleavage by ADAM10 to produce soluble 180 kDa soluble fragment takes place after the transmembrane region and before FZ 1. Post-translationally, a disulfide bond links the activated corin protease fragment and the N-terminal propeptide. The disulfide bond also links the activated corin protease fragment with soluble fragments (100 kDa, 160 kDa and 180 kDa fragments). As to expression, highly expressed in heart. Expressed in heart myocytes. Also expressed in pregnant uterus. Detected in blood, in plasma as well as in serum (at protein level).

It is found in the cell membrane. The protein localises to the secreted. With respect to regulation, inhibited in a dose-dependent manner by non-specific trypsin-like serine protease inhibitors including benzamidine. Serine-type endopeptidase involved in atrial natriuretic peptide (NPPA) and brain natriuretic peptide (NPPB) processing. Converts through proteolytic cleavage the non-functional propeptides NPPA and NPPB into their active hormones, ANP and BNP(1-32) respectively, thereby regulating blood pressure in the heart and promoting natriuresis, diuresis and vasodilation. Proteolytic cleavage of pro-NPPA also plays a role in female pregnancy by promoting trophoblast invasion and spiral artery remodeling in uterus. Also acts as a regulator of sodium reabsorption in kidney. Functionally, has weaker endopeptidase activity compared to isoform 1. The sequence is that of Atrial natriuretic peptide-converting enzyme (CORIN) from Homo sapiens (Human).